The following is a 91-amino-acid chain: Methanol dehydrogenase [cytochrome c] subunit 2 (91 aa).

Positions 1-22 are cleaved as a signal peptide; it reads MKHVLTLLALASVFAVSNQALA. A disulfide bond links Cys28 and Cys34.

The protein belongs to the methanol dehydrogenase subunit 2 family. Heterotetramer composed of 2 alpha and 2 beta subunits.

It is found in the cell inner membrane. The enzyme catalyses 2 Fe(III)-[cytochrome cL] + a primary alcohol = 2 Fe(II)-[cytochrome cL] + an aldehyde + 2 H(+). Catalyzes the oxidation of primary alcohols including methanol. This Methylophilus methylotrophus (Bacterium W3A1) protein is Methanol dehydrogenase [cytochrome c] subunit 2 (moxI).